Here is a 302-residue protein sequence, read N- to C-terminus: Serine/threonine-protein phosphatase alpha-2 isoform (302 aa).

D62, H64, D90, and N122 together coordinate Mn(2+). The active-site Proton donor is the H123. Mn(2+)-binding residues include H171 and H246.

This sequence belongs to the PPP phosphatase family. PP-1 subfamily. As to quaternary structure, interacts with Nop17l. Interacts with uri; uri inhibits Pp1-87B phosphatase activity. Interacts with Rif1. It depends on Mn(2+) as a cofactor.

Its subcellular location is the cytoplasm. It carries out the reaction O-phospho-L-seryl-[protein] + H2O = L-seryl-[protein] + phosphate. It catalyses the reaction O-phospho-L-threonyl-[protein] + H2O = L-threonyl-[protein] + phosphate. Is essential for the regulation of mitotic chromosomal segregation as well as regulation of chromatin condensation during interphase. In Drosophila melanogaster (Fruit fly), this protein is Serine/threonine-protein phosphatase alpha-2 isoform (Pp1-87B).